A 705-amino-acid chain; its full sequence is Polyribonucleotide nucleotidyltransferase (705 aa).

Positions 487 and 493 each coordinate Mg(2+). One can recognise a KH domain in the interval 554–613; that stretch reads PKILTMAIEPDKIRDVIGPSGKQINQIIDETGVKIDIEQDGSIFISSTDNEMNKKAKQII. The region spanning 623-691 is the S1 motif domain; it reads GQIYLGKVKR…RQGRVNLSRK (69 aa).

This sequence belongs to the polyribonucleotide nucleotidyltransferase family. It depends on Mg(2+) as a cofactor.

Its subcellular location is the cytoplasm. The enzyme catalyses RNA(n+1) + phosphate = RNA(n) + a ribonucleoside 5'-diphosphate. Its function is as follows. Involved in mRNA degradation. Catalyzes the phosphorolysis of single-stranded polyribonucleotides processively in the 3'- to 5'-direction. This is Polyribonucleotide nucleotidyltransferase from Oceanobacillus iheyensis (strain DSM 14371 / CIP 107618 / JCM 11309 / KCTC 3954 / HTE831).